Reading from the N-terminus, the 202-residue chain is MRYWYLRLAVFLGALAMPAWWLYQAWIFALGPDPGKTLVDRLGLGALVLLLLTLAMTPLQKLSGWPGWIAVRRQLGLWCFTYALLHLSAYCVFILGLDWGQLGIELSKRPYIIVGMLGFICLFLLAITSNRFAMRKLGSRWKKLHRLVYLILGLGLLHMLWVVRADLEEWTLYAVVGASLMLLRLPSIARRLPRLRGRPGVS.

Helical transmembrane passes span 8–28, 42–62, 75–95, 110–130, 147–167, and 169–189; these read LAVF…AWIF, LGLG…LQKL, LGLW…VFIL, PYII…ITSN, LVYL…RADL, and EWTL…PSIA.

This sequence belongs to the MsrQ family. Heterodimer of a catalytic subunit (MsrP) and a heme-binding subunit (MsrQ). The cofactor is FMN. Heme b is required as a cofactor.

The protein localises to the cell inner membrane. Functionally, part of the MsrPQ system that repairs oxidized periplasmic proteins containing methionine sulfoxide residues (Met-O), using respiratory chain electrons. Thus protects these proteins from oxidative-stress damage caused by reactive species of oxygen and chlorine generated by the host defense mechanisms. MsrPQ is essential for the maintenance of envelope integrity under bleach stress, rescuing a wide series of structurally unrelated periplasmic proteins from methionine oxidation. MsrQ provides electrons for reduction to the reductase catalytic subunit MsrP, using the quinone pool of the respiratory chain. In Pseudomonas paraeruginosa (strain DSM 24068 / PA7) (Pseudomonas aeruginosa (strain PA7)), this protein is Protein-methionine-sulfoxide reductase heme-binding subunit MsrQ.